Consider the following 182-residue polypeptide: Large ribosomal subunit protein uL6 (182 aa).

This sequence belongs to the universal ribosomal protein uL6 family. Part of the 50S ribosomal subunit.

Functionally, this protein binds to the 23S rRNA, and is important in its secondary structure. It is located near the subunit interface in the base of the L7/L12 stalk, and near the tRNA binding site of the peptidyltransferase center. This chain is Large ribosomal subunit protein uL6, found in Haloquadratum walsbyi (strain DSM 16790 / HBSQ001).